The primary structure comprises 159 residues: Probable minor fimbrial protein (159 aa).

Residues 1-6 (MKKMHG) constitute a propeptide, leader sequence. N-methylphenylalanine is present on Phe-7. Residues 7–29 (FTLIELMIVVAIIGVLASIALMQ) form a helical membrane-spanning segment. 2 disulfide bridges follow: Cys-56-Cys-71 and Cys-140-Cys-153.

The protein belongs to the N-Me-Phe pilin family. The pili are polar flexible filaments of about 5.4 nanometers diameter and 2.5 micrometers average length; they consist of only a single polypeptide chain arranged in a helical configuration of five subunits per turn in the assembled pilus.

Its subcellular location is the fimbrium. The protein localises to the membrane. The chain is Probable minor fimbrial protein (fimZ) from Dichelobacter nodosus (Bacteroides nodosus).